The sequence spans 837 residues: Striatin-interacting protein 1 (837 aa).

Methionine 1 bears the N-acetylmethionine mark. Disordered stretches follow at residues 1 to 66 (MEPA…SESP) and 333 to 423 (AASP…KGLP). Residues 18-35 (PQPPPPPPPATAQPPPGA) are compositionally biased toward pro residues. The segment covering 47 to 60 (KAREFNRNQRKDSE) has biased composition (basic and acidic residues). Phosphoserine occurs at positions 59, 335, and 339. The segment covering 356-377 (KALIKQDNLDAFNERDPYKADD) has biased composition (basic and acidic residues). The segment covering 378–391 (SREEEEENDDDNSL) has biased composition (acidic residues). Phosphoserine is present on serine 788. Residues 796–837 (DNCLQSVLGQRVDLPEDFQMNYDLWLEREVFSKPISWEELLQ) form a required for STRIPAK core complex formation region.

This sequence belongs to the STRIP family. In terms of assembly, part of the core of STRIPAK complexes composed of PP2A catalytic and scaffolding subunits, the striatins (PP2A regulatory subunits), the striatin-associated proteins MOB4, STRIP1 and STRIP2, PDCD10 and members of the STE20 kinases, such as STK24 and STK26. The STRIPAK complex can be extended by adapter proteins such as SLMAP:SIKE1, CTTNBP2 or CTTNBP2NL. Interacts with CDC42BPB. Interacts with CTTNBP2NL.

The protein localises to the cytoplasm. Its function is as follows. Plays a role in the regulation of cell morphology and cytoskeletal organization. Required in the cortical actin filament dynamics and cell shape. Part of the striatin-interacting phosphatase and kinase (STRIPAK) complexes. STRIPAK complexes have critical roles in protein (de)phosphorylation and are regulators of multiple signaling pathways including Hippo, MAPK, nuclear receptor and cytoskeleton remodeling. Different types of STRIPAK complexes are involved in a variety of biological processes such as cell growth, differentiation, apoptosis, metabolism and immune regulation. The chain is Striatin-interacting protein 1 (STRIP1) from Macaca fascicularis (Crab-eating macaque).